Consider the following 786-residue polypeptide: MADSGDKDVSKSVRFDKESIESKKRSSVDDSASSYSSSSSGQDRSEGKRNNVKFSTEDSDDEDGNLFSRMIKNLKSNGGAGLAPGLSKANSNQEKTDLEDNDNVVTGHSDDIPMEDFTSEAQNILQGHSNLTPAQIEALNGQGLSDIETTASSTDLNFLAPAIDHFDDFDGDGEEENDGFVDTHGYVAPPTQVRGGVLGSLLKLYQEQDNATIETSSMYSQSSYGESTANLMSIDSGETEVPSEHKPKDHKNVFMRSGGKVAGLAMNAPGQIYGHGSKAAGHIYGHGRKGAGHIYNQGKKGAGHIYSQKNKLSSADLSTEGLKKSGHKAKKVAGKMPKLRKRMLAEAKITVHIAELLQRQRFILRMCKALMLYGAPTHRLEEYMIMTSRVLEIDGQYLYLPGCMIVSFGDATTRTSEVQLVRCTQGLNLWKLHQVHGVYKKVIHDQMGADEGNIEIDRILREKNLYPPWVCVFLYGFCSAMVTPYAFGGHWINLAITFFMGSCVGMMQFILSEKSLMYSNVFEITASIVVSFCGRAFGSIPNSNICFGAITQGSLALILPGYIILCGSLELQSRSLVAGSVRMFYAIIYSLFLGFGITLGAALFGWMYKGATNEISCGYPISPWFRFLFVPAFTIGISLINQANWTQLPAMVFISCTGYVVTYWSGKHFQNSTEFTAALASFVIGILGNLYSRIWQGLAVSAMLPAIFVQVPSGIASQNSLLSGLQSANQIVGRNGTNAVQTVDLSNSMSFGITMIEVSIGISVGLFASTLCVYPFGKKKTGLFSL.

Residues 1–28 (MADSGDKDVSKSVRFDKESIESKKRSSV) are compositionally biased toward basic and acidic residues. Disordered regions lie at residues 1 to 65 (MADS…EDGN) and 77 to 103 (NGGA…DNDN). The span at 29–42 (DDSASSYSSSSSGQ) shows a compositional bias: low complexity. Transmembrane regions (helical) follow at residues 469 to 489 (WVCV…AFGG), 491 to 511 (WINL…QFIL), 521 to 541 (VFEI…GSIP), 545 to 565 (ICFG…YIIL), 584 to 604 (FYAI…AALF), 620 to 640 (PISP…ISLI), 645 to 665 (WTQL…TYWS), 675 to 695 (FTAA…SRIW), 697 to 717 (GLAV…GIAS), and 751 to 771 (FGIT…ASTL).

The protein belongs to the ThrE exporter (TC 2.A.79) family.

It localises to the membrane. This is Pheromone-regulated membrane protein 10 from Candida glabrata (strain ATCC 2001 / BCRC 20586 / JCM 3761 / NBRC 0622 / NRRL Y-65 / CBS 138) (Yeast).